The sequence spans 335 residues: Serpentine receptor class alpha-13 (335 aa).

Over 1 to 22 (MAIVSSENRTCADEKLLALYQS) the chain is Extracellular. The helical transmembrane segment at 23–43 (WSYIASIVFNCLVPTISTYFL) threads the bilayer. Residues 44 to 61 (GRAIFQLCNQATIQYSTR) are Cytoplasmic-facing. Residues 62 to 82 (ILLIATILFAACHQVSYFAFK) traverse the membrane as a helical segment. Residues 83–107 (IDLLHTMFFKLDQPCFLQRSSYDCR) lie on the Extracellular side of the membrane. The helical transmembrane segment at 108–128 (FISIAQTTGVVGMALTGLAMS) threads the bilayer. Over 129–149 (TDRALALTFPADYHKLKSVPR) the chain is Cytoplasmic. The helical transmembrane segment at 150–170 (VVLSVFVFIVSFSTWFLLTMN) threads the bilayer. The Extracellular portion of the chain corresponds to 171–192 (DPLTGYLNHCGFYPSYSVANFQ). A helical transmembrane segment spans residues 193–213 (LMLDVILYLAIFNLIWDVILF). The Cytoplasmic portion of the chain corresponds to 214 to 235 (YYARQQILWRRSYQFQKRYEAR). Residues 236 to 255 (ISLNCTQAVFVISICQCISN) traverse the membrane as a helical segment. Over 256–278 (GANSGLMRLLMMIGTSITSVTYS) the chain is Extracellular. A helical transmembrane segment spans residues 279–299 (SLLSLFYTAPYSCILLPILMM). Residues 300–335 (RISEYIREQRTIGILSLRSEKPGLEEHHQRMRAAWS) lie on the Cytoplasmic side of the membrane.

Belongs to the nematode receptor-like protein sra family.

The protein resides in the membrane. Functionally, chemosensory receptor that negatively regulates RAS/MAPK signaling during vulva induction and the negative regulation of olfaction of volitile attractants. Required for the suppression of vulval induction in response to food starvation. Signaling acts through the GPA-5 G-alpha protein subunit. The chain is Serpentine receptor class alpha-13 from Caenorhabditis briggsae.